Here is a 104-residue protein sequence, read N- to C-terminus: ATP-dependent Clp protease adapter protein ClpS (104 aa).

It belongs to the ClpS family. As to quaternary structure, binds to the N-terminal domain of the chaperone ClpA.

Its function is as follows. Involved in the modulation of the specificity of the ClpAP-mediated ATP-dependent protein degradation. The chain is ATP-dependent Clp protease adapter protein ClpS from Paraburkholderia xenovorans (strain LB400).